The primary structure comprises 1340 residues: DNA-directed RNA polymerase subunit beta (1340 aa).

The protein belongs to the RNA polymerase beta chain family. As to quaternary structure, the RNAP catalytic core consists of 2 alpha, 1 beta, 1 beta' and 1 omega subunit. When a sigma factor is associated with the core the holoenzyme is formed, which can initiate transcription.

The enzyme catalyses RNA(n) + a ribonucleoside 5'-triphosphate = RNA(n+1) + diphosphate. Its function is as follows. DNA-dependent RNA polymerase catalyzes the transcription of DNA into RNA using the four ribonucleoside triphosphates as substrates. The polypeptide is DNA-directed RNA polymerase subunit beta (Baumannia cicadellinicola subsp. Homalodisca coagulata).